The primary structure comprises 515 residues: Maturase K (515 aa).

It belongs to the intron maturase 2 family. MatK subfamily.

It is found in the plastid. Its subcellular location is the chloroplast. Usually encoded in the trnK tRNA gene intron. Probably assists in splicing its own and other chloroplast group II introns. This Trillium luteum (Yellow wakerobin) protein is Maturase K.